We begin with the raw amino-acid sequence, 401 residues long: S-adenosylmethionine synthase (401 aa).

Gly-135–Asp-140 is an ATP binding site.

It belongs to the AdoMet synthase 2 family. The cofactor is Mg(2+).

The catalysed reaction is L-methionine + ATP + H2O = S-adenosyl-L-methionine + phosphate + diphosphate. It participates in amino-acid biosynthesis; S-adenosyl-L-methionine biosynthesis; S-adenosyl-L-methionine from L-methionine: step 1/1. Its function is as follows. Catalyzes the formation of S-adenosylmethionine from methionine and ATP. The protein is S-adenosylmethionine synthase (mat) of Methanothermobacter marburgensis (strain ATCC BAA-927 / DSM 2133 / JCM 14651 / NBRC 100331 / OCM 82 / Marburg) (Methanobacterium thermoautotrophicum).